The chain runs to 78 residues: DNA gyrase inhibitor YacG (78 aa).

Zn(2+) contacts are provided by Cys-7, Cys-10, Cys-26, and Cys-30.

It belongs to the DNA gyrase inhibitor YacG family. As to quaternary structure, interacts with GyrB. The cofactor is Zn(2+).

In terms of biological role, inhibits all the catalytic activities of DNA gyrase by preventing its interaction with DNA. Acts by binding directly to the C-terminal domain of GyrB, which probably disrupts DNA binding by the gyrase. The chain is DNA gyrase inhibitor YacG from Shewanella piezotolerans (strain WP3 / JCM 13877).